Reading from the N-terminus, the 61-residue chain is Metallothionein-1B (61 aa).

Positions 1–29 (MDPNCSCTTGGSCACAGSCKCKECKCTSC) are beta. 20 residues coordinate a divalent metal cation: Cys-5, Cys-7, Cys-13, Cys-15, Cys-19, Cys-21, Cys-24, Cys-26, Cys-29, Cys-33, Cys-34, Cys-36, Cys-37, Cys-41, Cys-44, Cys-48, Cys-50, Cys-57, Cys-59, and Cys-60. Residues 30-61 (KKCCCSCCPVGCAKCAQGCVCKGSSEKCRCCA) form an alpha region.

Belongs to the metallothionein superfamily. Type 1 family. Monomer.

Metallothioneins have a high content of cysteine residues that bind various heavy metals; these proteins are transcriptionally regulated by both heavy metals and glucocorticoids. The chain is Metallothionein-1B (MT1B) from Homo sapiens (Human).